The chain runs to 386 residues: Mannitol-1-phosphate 5-dehydrogenase (386 aa).

Residue 4–15 participates in NAD(+) binding; sequence AIHFGGGNIGRG. K211 is a catalytic residue.

This sequence belongs to the mannitol dehydrogenase family. Monomer.

It catalyses the reaction D-mannitol 1-phosphate + NAD(+) = beta-D-fructose 6-phosphate + NADH + H(+). Catalyzes the NAD(H)-dependent interconversion of D-fructose 6-phosphate and D-mannitol 1-phosphate in the mannitol metabolic pathway. This chain is Mannitol-1-phosphate 5-dehydrogenase (mpdA), found in Emericella nidulans (strain FGSC A4 / ATCC 38163 / CBS 112.46 / NRRL 194 / M139) (Aspergillus nidulans).